The chain runs to 824 residues: MNRRGGQTAFAAIARNERAIAAFIPYSSHLTDTTLITHGADLVRTWRVQGIAFESAEPELVSQRHEQLNGLWRAISCEQVALWIHCIRRKTQAGLDARYENPFCRALDASYNARLNARQAMTNEFYLTLVYRPGHAALGKRAHHGQAEVRRQLLAHVRRMDEIGSLIETTLRSHGENHEQAITVLGCETDSAGRRYSRTLTLLEFLLTGHWQPVRVPAGPVDAYLGSSRILAGAEMMELRAPTCRRYAQFIDFKEYGTHTEPGMLNALLYEDYEYVITHSFSAVGKRQALAYLQRQRAQLANVQDAAYSQIDDLAHAEDALVNGDFVIGEYHFSMMILGADPRQLRRDVSSAMTRIQERGFLATPVTLALDAAFYAQLPANWAYRSRKAMLTSRNFAGLCSFHNFYGGKRDGNPWGPALSLLSTPSGQPFYFNFHHSGLDEDCRGQMMLGNTRIIGQSGSGKTVLLNFLLCQLQKFRSADADGLTTIFFDKDRGAEICIRALDGQYLRIRDGEPTGFNPLQLPCTDRNVMFLDSLLAMLARAHDSPLTSAQHATLATAVRTVLRMPASLRRMSTLLQNITQATSEQRELVRRLGRWCRDDGAGGTGMLWWVFDNPNDCLDFSRPGNYGIDGTAFLDNAETRTPISMYLLHRMNEAMDGRRFVYLMDEAWKWIDDPAFAEFAGDQQLTIRKKNGLGVFSTQMPSSLLGARVAASLVQQCATEIYLPNPRADRAEYLDGFKCTETEYQLIRSMAEDSHLFLVKQGRQAVVAQLDLSGMDDELAILSGNARNLRCFEQALALTRERDPNDWIAVFHRLRREASAGLR.

456–463 (GQSGSGKT) serves as a coordination point for ATP.

This sequence belongs to the TrbE/VirB4 family.

It is found in the cell membrane. In terms of biological role, component of the type IV secretion system ptl essential for secretion of assembled pertussis toxin (PTX) through the outer membrane. The chain is Type IV secretion system protein PtlC (ptlC) from Bordetella pertussis (strain Tohama I / ATCC BAA-589 / NCTC 13251).